A 217-amino-acid polypeptide reads, in one-letter code: Thiopurine S-methyltransferase (217 aa).

S-adenosyl-L-methionine is bound by residues tryptophan 11, leucine 46, glutamate 67, and arginine 122.

This sequence belongs to the class I-like SAM-binding methyltransferase superfamily. TPMT family.

The protein resides in the cytoplasm. It carries out the reaction S-adenosyl-L-methionine + a thiopurine = S-adenosyl-L-homocysteine + a thiopurine S-methylether.. The polypeptide is Thiopurine S-methyltransferase (Vibrio vulnificus (strain YJ016)).